An 840-amino-acid polypeptide reads, in one-letter code: Protein translocase subunit SecA (840 aa).

Residues Gln-85, 103–107 (GEGKT), and Asp-492 each bind ATP. The disordered stretch occupies residues 787–821 (QRERVAKETGASHGGDSQEIKKKPVKKEPKVGRND). The span at 802–819 (DSQEIKKKPVKKEPKVGR) shows a compositional bias: basic and acidic residues. The Zn(2+) site is built by Cys-823, Cys-825, Cys-834, and Cys-835.

Belongs to the SecA family. In terms of assembly, monomer and homodimer. Part of the essential Sec protein translocation apparatus which comprises SecA, SecYEG and auxiliary proteins SecDF. Other proteins may also be involved. Requires Zn(2+) as cofactor.

It localises to the cell membrane. It is found in the cytoplasm. It catalyses the reaction ATP + H2O + cellular proteinSide 1 = ADP + phosphate + cellular proteinSide 2.. Its function is as follows. Part of the Sec protein translocase complex. Interacts with the SecYEG preprotein conducting channel. Has a central role in coupling the hydrolysis of ATP to the transfer of proteins into and across the cell membrane, serving as an ATP-driven molecular motor driving the stepwise translocation of polypeptide chains across the membrane. The polypeptide is Protein translocase subunit SecA (Clostridium perfringens (strain 13 / Type A)).